Reading from the N-terminus, the 94-residue chain is Probable HNH endonuclease (94 aa).

This sequence belongs to the skunalikevirus HNH endonuclease family.

Its function is as follows. Probable HNH endonuclease. The sequence is that of Probable HNH endonuclease from Lactococcus lactis (Lactococcus lactis bacteriophage SK1).